Consider the following 544-residue polypeptide: Chaperonin GroEL 4 (544 aa).

Residues 30 to 33 (TLGP), Lys51, 87 to 91 (DGTTT), Gly415, and Asp496 contribute to the ATP site.

Belongs to the chaperonin (HSP60) family. Forms a cylinder of 14 subunits composed of two heptameric rings stacked back-to-back. Interacts with the co-chaperonin GroES.

It localises to the cytoplasm. It catalyses the reaction ATP + H2O + a folded polypeptide = ADP + phosphate + an unfolded polypeptide.. Functionally, together with its co-chaperonin GroES, plays an essential role in assisting protein folding. The GroEL-GroES system forms a nano-cage that allows encapsulation of the non-native substrate proteins and provides a physical environment optimized to promote and accelerate protein folding. This Sinorhizobium medicae (strain WSM419) (Ensifer medicae) protein is Chaperonin GroEL 4.